The primary structure comprises 368 residues: uncharacterized protein (368 aa).

This sequence belongs to the ornithine cyclodeaminase/mu-crystallin family.

This is an uncharacterized protein from Dictyostelium discoideum (Social amoeba).